Here is a 523-residue protein sequence, read N- to C-terminus: GMP synthase [glutamine-hydrolyzing] (523 aa).

The region spanning 8–205 (KILILDFGSQ…VVGICGCECK (198 aa)) is the Glutamine amidotransferase type-1 domain. Cys85 (nucleophile) is an active-site residue. Catalysis depends on residues His179 and Glu181. One can recognise a GMPS ATP-PPase domain in the interval 206-398 (WTAENIIEDA…LGLPAEMLNR (193 aa)). 233–239 (SGGVDSS) contacts ATP.

In terms of assembly, homodimer.

It carries out the reaction XMP + L-glutamine + ATP + H2O = GMP + L-glutamate + AMP + diphosphate + 2 H(+). Its pathway is purine metabolism; GMP biosynthesis; GMP from XMP (L-Gln route): step 1/1. Its function is as follows. Catalyzes the synthesis of GMP from XMP. This chain is GMP synthase [glutamine-hydrolyzing], found in Actinobacillus pleuropneumoniae serotype 3 (strain JL03).